We begin with the raw amino-acid sequence, 375 residues long: Alcohol dehydrogenase 1B (375 aa).

The residue at position 1 (serine 1) is an N-acetylserine. The Zn(2+) site is built by cysteine 46, histidine 67, cysteine 97, cysteine 100, cysteine 103, cysteine 111, and cysteine 174. Residues glycine 199 to glycine 204, aspartate 223, lysine 228, valine 293 to valine 295, and arginine 370 each bind NAD(+).

The protein belongs to the zinc-containing alcohol dehydrogenase family. Class-I subfamily. As to quaternary structure, multimeric (with different ratios of monomers). Zn(2+) is required as a cofactor.

Its subcellular location is the cytoplasm. It catalyses the reaction a primary alcohol + NAD(+) = an aldehyde + NADH + H(+). The catalysed reaction is a secondary alcohol + NAD(+) = a ketone + NADH + H(+). The sequence is that of Alcohol dehydrogenase 1B from Saara hardwickii (Indian spiny-tailed lizard).